A 258-amino-acid polypeptide reads, in one-letter code: Type III pantothenate kinase (258 aa).

An ATP-binding site is contributed by 6 to 13 (DVGNSDTV). 108–111 (GSDR) serves as a coordination point for substrate. Aspartate 110 serves as the catalytic Proton acceptor. Aspartate 130 contacts K(+). Threonine 133 contributes to the ATP binding site. Position 185 (threonine 185) interacts with substrate.

Belongs to the type III pantothenate kinase family. In terms of assembly, homodimer. The cofactor is NH4(+). Requires K(+) as cofactor.

It localises to the cytoplasm. It carries out the reaction (R)-pantothenate + ATP = (R)-4'-phosphopantothenate + ADP + H(+). Its pathway is cofactor biosynthesis; coenzyme A biosynthesis; CoA from (R)-pantothenate: step 1/5. In terms of biological role, catalyzes the phosphorylation of pantothenate (Pan), the first step in CoA biosynthesis. In Thermobifida fusca (strain YX), this protein is Type III pantothenate kinase.